We begin with the raw amino-acid sequence, 377 residues long: N-acetyldiaminopimelate deacetylase (377 aa).

Aspartate 69 is an active-site residue. The active-site Proton acceptor is glutamate 128.

This sequence belongs to the peptidase M20A family. N-acetyldiaminopimelate deacetylase subfamily.

The enzyme catalyses N-acetyl-(2S,6S)-2,6-diaminopimelate + H2O = (2S,6S)-2,6-diaminopimelate + acetate. Its pathway is amino-acid biosynthesis; L-lysine biosynthesis via DAP pathway; LL-2,6-diaminopimelate from (S)-tetrahydrodipicolinate (acetylase route): step 3/3. In terms of biological role, catalyzes the conversion of N-acetyl-diaminopimelate to diaminopimelate and acetate. In Streptococcus gordonii (strain Challis / ATCC 35105 / BCRC 15272 / CH1 / DL1 / V288), this protein is N-acetyldiaminopimelate deacetylase.